We begin with the raw amino-acid sequence, 108 residues long: UPF0145 protein LJ_1287 (108 aa).

The protein belongs to the UPF0145 family.

This is UPF0145 protein LJ_1287 from Lactobacillus johnsonii (strain CNCM I-12250 / La1 / NCC 533).